The sequence spans 140 residues: Large ribosomal subunit protein bL17 (140 aa).

This sequence belongs to the bacterial ribosomal protein bL17 family. As to quaternary structure, part of the 50S ribosomal subunit. Contacts protein L32.

The polypeptide is Large ribosomal subunit protein bL17 (Rhizobium johnstonii (strain DSM 114642 / LMG 32736 / 3841) (Rhizobium leguminosarum bv. viciae)).